Consider the following 641-residue polypeptide: Phosphomethylpyrimidine synthase (641 aa).

Substrate-binding positions include asparagine 221, methionine 250, tyrosine 279, histidine 315, 335–337, 376–379, and glutamate 415; these read SRG and DGLR. Histidine 419 lines the Zn(2+) pocket. Tyrosine 442 lines the substrate pocket. A Zn(2+)-binding site is contributed by histidine 483. Residues cysteine 563, cysteine 566, and cysteine 571 each contribute to the [4Fe-4S] cluster site.

Belongs to the ThiC family. Homodimer. Requires [4Fe-4S] cluster as cofactor.

The enzyme catalyses 5-amino-1-(5-phospho-beta-D-ribosyl)imidazole + S-adenosyl-L-methionine = 4-amino-2-methyl-5-(phosphooxymethyl)pyrimidine + CO + 5'-deoxyadenosine + formate + L-methionine + 3 H(+). The protein operates within cofactor biosynthesis; thiamine diphosphate biosynthesis. Catalyzes the synthesis of the hydroxymethylpyrimidine phosphate (HMP-P) moiety of thiamine from aminoimidazole ribotide (AIR) in a radical S-adenosyl-L-methionine (SAM)-dependent reaction. In Rhodopseudomonas palustris (strain BisA53), this protein is Phosphomethylpyrimidine synthase.